Reading from the N-terminus, the 308-residue chain is Protoheme IX farnesyltransferase (308 aa).

8 consecutive transmembrane segments (helical) span residues 31 to 51, 53 to 73, 102 to 122, 124 to 144, 149 to 169, 170 to 190, 240 to 260, and 288 to 308; these read VIEL…RGTV, PLLI…ANAL, NALV…WWTT, LLSG…YTLL, TSQN…IGWS, AVTG…FFWT, LALA…VWFL, and YLAV…PHLF.

This sequence belongs to the UbiA prenyltransferase family. Protoheme IX farnesyltransferase subfamily.

The protein localises to the cell membrane. It carries out the reaction heme b + (2E,6E)-farnesyl diphosphate + H2O = Fe(II)-heme o + diphosphate. Its pathway is porphyrin-containing compound metabolism; heme O biosynthesis; heme O from protoheme: step 1/1. Its function is as follows. Converts heme B (protoheme IX) to heme O by substitution of the vinyl group on carbon 2 of heme B porphyrin ring with a hydroxyethyl farnesyl side group. In Mycobacterium avium (strain 104), this protein is Protoheme IX farnesyltransferase.